Here is a 278-residue protein sequence, read N- to C-terminus: Urease accessory protein UreD 3 (278 aa).

Belongs to the UreD family. UreD, UreF and UreG form a complex that acts as a GTP-hydrolysis-dependent molecular chaperone, activating the urease apoprotein by helping to assemble the nickel containing metallocenter of UreC. The UreE protein probably delivers the nickel.

It is found in the cytoplasm. Functionally, required for maturation of urease via the functional incorporation of the urease nickel metallocenter. This Bradyrhizobium sp. (strain BTAi1 / ATCC BAA-1182) protein is Urease accessory protein UreD 3.